Here is a 411-residue protein sequence, read N- to C-terminus: Cytosolic Fe-S cluster assembly factor narfl (411 aa).

5 residues coordinate [4Fe-4S] cluster: cysteine 11, cysteine 124, cysteine 180, cysteine 329, and cysteine 333.

It belongs to the NARF family. As to quaternary structure, component of the CIA complex.

Component of the cytosolic iron-sulfur protein assembly (CIA) complex, a multiprotein complex that mediates the incorporation of iron-sulfur cluster into extramitochondrial Fe/S proteins. In Danio rerio (Zebrafish), this protein is Cytosolic Fe-S cluster assembly factor narfl (narfl).